We begin with the raw amino-acid sequence, 961 residues long: Roundabout homolog 4 (961 aa).

A signal peptide spans 1–37; it reads MGQGEELRAAVDSGGMGLLGTKCPLPLLLLFIMGGKA. 2 consecutive Ig-like C2-type domains span residues 42–142 and 148–235; these read PQIL…ARLS and EDFR…ARVS. 2 disulfides stabilise this stretch: Cys63–Cys125 and Cys169–Cys218. N-linked (GlcNAc...) asparagine glycans are attached at residues Asn211 and Asn257. 2 Fibronectin type-III domains span residues 259–356 and 358–453; these read TLLN…LPEQ and PSAP…LEQA. N-linked (GlcNAc...) asparagine glycans are attached at residues Asn371, Asn400, and Asn407. A compositionally biased stretch (low complexity) spans 544-559; the sequence is SGSRDLSSSSSLSSRL. 2 disordered regions span residues 544-563 and 600-634; these read SGSRDLSSSSSLSSRLGVDP and QTSSPPVRPSPQTPAARRLPPKLTGTSSPWASSDS. Over residues 623–634 the composition is skewed to polar residues; that stretch reads TGTSSPWASSDS. N-linked (GlcNAc...) asparagine glycosylation is found at Asn691 and Asn723. Residues 726-810 form a disordered region; that stretch reads ELAARPLPPT…SLEEEDQDSV (85 aa). A compositionally biased stretch (low complexity) spans 755–769; it reads LQAPSSDPLPAAPLS. Residues 770–783 show a composition bias toward polar residues; it reads VLNSSRPSSPQASF. Residues Asn772 and Asn793 are each glycosylated (N-linked (GlcNAc...) asparagine). The span at 784–801 shows a compositional bias: low complexity; that stretch reads LSVPSPGSSNLSSSSLSS. Position 823 is a phosphoserine (Ser823).

Belongs to the immunoglobulin superfamily. ROBO family. In terms of assembly, interacts with SLIT2 and ENAH.

In terms of biological role, receptor for Slit proteins, at least for SLIT2, and seems to be involved in angiogenesis and vascular patterning. May mediate the inhibition of primary endothelial cell migration by Slit proteins. Involved in the maintenance of endothelial barrier organization and function. In Rattus norvegicus (Rat), this protein is Roundabout homolog 4 (Robo4).